Here is a 353-residue protein sequence, read N- to C-terminus: Photosystem II D2 protein (353 aa).

Thr2 is modified (N-acetylthreonine). Thr2 is modified (phosphothreonine). The chain crosses the membrane as a helical span at residues 41 to 61 (CAYFALGGWFTGTTFVTSWYT). Residue His118 participates in chlorophyll a binding. Residues 125–141 (GFMLRQFELARSVQLRP) traverse the membrane as a helical segment. Residues Gln130 and Asn143 each contribute to the pheophytin a site. The chain crosses the membrane as a helical span at residues 153 to 166 (VFVSVFLIYPLGQS). His198 is a chlorophyll a binding site. A helical transmembrane segment spans residues 208-228 (AALLCAIHGATVENTLFEDGD). The a plastoquinone site is built by His215 and Phe262. Residue His215 participates in Fe cation binding. His269 is a binding site for Fe cation. Residues 279–295 (GLWMSAIGVVGLALNLR) form a helical membrane-spanning segment.

Belongs to the reaction center PufL/M/PsbA/D family. PSII is composed of 1 copy each of membrane proteins PsbA, PsbB, PsbC, PsbD, PsbE, PsbF, PsbH, PsbI, PsbJ, PsbK, PsbL, PsbM, PsbT, PsbX, PsbY, PsbZ, Psb30/Ycf12, at least 3 peripheral proteins of the oxygen-evolving complex and a large number of cofactors. It forms dimeric complexes. It depends on The D1/D2 heterodimer binds P680, chlorophylls that are the primary electron donor of PSII, and subsequent electron acceptors. It shares a non-heme iron and each subunit binds pheophytin, quinone, additional chlorophylls, carotenoids and lipids. There is also a Cl(-1) ion associated with D1 and D2, which is required for oxygen evolution. The PSII complex binds additional chlorophylls, carotenoids and specific lipids. as a cofactor.

The protein localises to the plastid. The protein resides in the chloroplast thylakoid membrane. The enzyme catalyses 2 a plastoquinone + 4 hnu + 2 H2O = 2 a plastoquinol + O2. Photosystem II (PSII) is a light-driven water:plastoquinone oxidoreductase that uses light energy to abstract electrons from H(2)O, generating O(2) and a proton gradient subsequently used for ATP formation. It consists of a core antenna complex that captures photons, and an electron transfer chain that converts photonic excitation into a charge separation. The D1/D2 (PsbA/PsbD) reaction center heterodimer binds P680, the primary electron donor of PSII as well as several subsequent electron acceptors. D2 is needed for assembly of a stable PSII complex. The sequence is that of Photosystem II D2 protein from Oryza nivara (Indian wild rice).